Here is a 224-residue protein sequence, read N- to C-terminus: Myogenin (224 aa).

Serine 77 and serine 79 each carry phosphoserine; by CaMK2G. The region spanning 81-132 is the bHLH domain; the sequence is DRRRAATLREKRRLKKVNEAFEALKRSTLLNPNQRLPKVEILRSAIQYIERL. Threonine 87 carries the phosphothreonine; by CaMK2G modification.

In terms of assembly, homodimer and heterodimer with E12; heterodimerization enhances MYOG DNA-binding and transcriptional activities. Interacts with SMARCA4/BRG1/BAF190A. Interacts (via C-terminal region) with SSRP1 and SUPT16H; the interaction is indicative of an interaction with the FACT complex. Interacts with CSRP3. Post-translationally, phosphorylated by CAMK2G on threonine and serine amino acids in a muscle activity-dependent manner. Phosphorylation of Thr-87 impairs both DNA-binding and trans-activation functions in contracting muscles.

The protein localises to the nucleus. Functionally, acts as a transcriptional activator that promotes transcription of muscle-specific target genes and plays a role in muscle differentiation, cell cycle exit and muscle atrophy. Essential for the development of functional embryonic skeletal fiber muscle differentiation. However is dispensable for postnatal skeletal muscle growth; phosphorylation by CAMK2G inhibits its transcriptional activity in respons to muscle activity. Required for the recruitment of the FACT complex to muscle-specific promoter regions, thus promoting gene expression initiation. During terminal myoblast differentiation, plays a role as a strong activator of transcription at loci with an open chromatin structure previously initiated by MYOD1. Together with MYF5 and MYOD1, co-occupies muscle-specific gene promoter core regions during myogenesis. Also cooperates with myocyte-specific enhancer factor MEF2D and BRG1-dependent recruitment of SWI/SNF chromatin-remodeling enzymes to alter chromatin structure at myogenic late gene promoters. Facilitates cell cycle exit during terminal muscle differentiation through the up-regulation of miR-20a expression, which in turn represses genes involved in cell cycle progression. Binds to the E-box containing (E1) promoter region of the miR-20a gene. Also plays a role in preventing reversal of muscle cell differentiation. Contributes to the atrophy-related gene expression in adult denervated muscles. Induces fibroblasts to differentiate into myoblasts. In Homo sapiens (Human), this protein is Myogenin (MYOG).